The sequence spans 638 residues: 1-deoxy-D-xylulose-5-phosphate synthase (638 aa).

Residues histidine 72 and 113–115 (GHA) contribute to the thiamine diphosphate site. Aspartate 144 contacts Mg(2+). Thiamine diphosphate-binding positions include 145 to 146 (GA), asparagine 174, tyrosine 287, and glutamate 370. Mg(2+) is bound at residue asparagine 174.

This sequence belongs to the transketolase family. DXPS subfamily. Homodimer. Requires Mg(2+) as cofactor. The cofactor is thiamine diphosphate.

The catalysed reaction is D-glyceraldehyde 3-phosphate + pyruvate + H(+) = 1-deoxy-D-xylulose 5-phosphate + CO2. It functions in the pathway metabolic intermediate biosynthesis; 1-deoxy-D-xylulose 5-phosphate biosynthesis; 1-deoxy-D-xylulose 5-phosphate from D-glyceraldehyde 3-phosphate and pyruvate: step 1/1. In terms of biological role, catalyzes the acyloin condensation reaction between C atoms 2 and 3 of pyruvate and glyceraldehyde 3-phosphate to yield 1-deoxy-D-xylulose-5-phosphate (DXP). This chain is 1-deoxy-D-xylulose-5-phosphate synthase, found in Picosynechococcus sp. (strain ATCC 27264 / PCC 7002 / PR-6) (Agmenellum quadruplicatum).